A 307-amino-acid polypeptide reads, in one-letter code: ATP-dependent (S)-NAD(P)H-hydrate dehydratase (307 aa).

Residues 1–291 (MDHFLKLLPK…DEIPKLVRDV (291 aa)) enclose the YjeF C-terminal domain. Residues G96 and 150 to 156 (NIVEFSR) each bind (6S)-NADPHX. ATP is bound by residues 194-198 (KGEVD) and 214-223 (SSLRRCGGQG). Residue D224 participates in (6S)-NADPHX binding.

Belongs to the NnrD/CARKD family. Mg(2+) serves as cofactor.

It catalyses the reaction (6S)-NADHX + ATP = ADP + phosphate + NADH + H(+). It carries out the reaction (6S)-NADPHX + ATP = ADP + phosphate + NADPH + H(+). Functionally, catalyzes the dehydration of the S-form of NAD(P)HX at the expense of ATP, which is converted to ADP. Together with NAD(P)HX epimerase, which catalyzes the epimerization of the S- and R-forms, the enzyme allows the repair of both epimers of NAD(P)HX, a damaged form of NAD(P)H that is a result of enzymatic or heat-dependent hydration. This chain is ATP-dependent (S)-NAD(P)H-hydrate dehydratase, found in Caenorhabditis briggsae.